The chain runs to 395 residues: Elongation factor Tu (395 aa).

In terms of domain architecture, tr-type G spans 10–204 (KPHVNIGTIG…AVDEYIPTPQ (195 aa)). Residues 19-26 (GHVDHGKT) form a G1 region. Residue 19 to 26 (GHVDHGKT) participates in GTP binding. T26 serves as a coordination point for Mg(2+). The tract at residues 60–64 (GITIS) is G2. Residues 81–84 (DCPG) are G3. GTP is bound by residues 81-85 (DCPGH) and 136-139 (NKCD). The segment at 136-139 (NKCD) is G4. The interval 174–176 (SAL) is G5.

Belongs to the TRAFAC class translation factor GTPase superfamily. Classic translation factor GTPase family. EF-Tu/EF-1A subfamily. As to quaternary structure, monomer.

The protein localises to the cytoplasm. The enzyme catalyses GTP + H2O = GDP + phosphate + H(+). GTP hydrolase that promotes the GTP-dependent binding of aminoacyl-tRNA to the A-site of ribosomes during protein biosynthesis. The polypeptide is Elongation factor Tu (Anoxybacillus flavithermus (strain DSM 21510 / WK1)).